The following is a 394-amino-acid chain: Elongation factor Tu (394 aa).

Residues 10 to 204 (KPHVNVGTIG…ALDSYIPTPE (195 aa)) enclose the tr-type G domain. A G1 region spans residues 19–26 (GHVDHGKT). 19 to 26 (GHVDHGKT) contacts GTP. Threonine 26 contacts Mg(2+). The G2 stretch occupies residues 60–64 (GITIN). Residues 81 to 84 (DCPG) are G3. GTP contacts are provided by residues 81–85 (DCPGH) and 136–139 (NKCD). The interval 136-139 (NKCD) is G4. The G5 stretch occupies residues 174–176 (SAL).

The protein belongs to the TRAFAC class translation factor GTPase superfamily. Classic translation factor GTPase family. EF-Tu/EF-1A subfamily. As to quaternary structure, monomer.

It localises to the cytoplasm. The enzyme catalyses GTP + H2O = GDP + phosphate + H(+). Its function is as follows. GTP hydrolase that promotes the GTP-dependent binding of aminoacyl-tRNA to the A-site of ribosomes during protein biosynthesis. The chain is Elongation factor Tu from Neisseria gonorrhoeae (strain ATCC 700825 / FA 1090).